A 306-amino-acid polypeptide reads, in one-letter code: UDP-N-acetylenolpyruvoylglucosamine reductase (306 aa).

One can recognise an FAD-binding PCMH-type domain in the interval 34 to 199 (KSGGAAEWLF…VAATFRGHAE (166 aa)). Residue Arg179 is part of the active site. A disordered region spans residues 215-234 (REASQPLRSRTGGSTFKNPQ). Residues 220–232 (PLRSRTGGSTFKN) are compositionally biased toward polar residues. Ser228 serves as the catalytic Proton donor. Glu298 is a catalytic residue.

It belongs to the MurB family. FAD is required as a cofactor.

Its subcellular location is the cytoplasm. The enzyme catalyses UDP-N-acetyl-alpha-D-muramate + NADP(+) = UDP-N-acetyl-3-O-(1-carboxyvinyl)-alpha-D-glucosamine + NADPH + H(+). It participates in cell wall biogenesis; peptidoglycan biosynthesis. Cell wall formation. In Rhizorhabdus wittichii (strain DSM 6014 / CCUG 31198 / JCM 15750 / NBRC 105917 / EY 4224 / RW1) (Sphingomonas wittichii), this protein is UDP-N-acetylenolpyruvoylglucosamine reductase.